Consider the following 350-residue polypeptide: MLSLACFFSFLLMVKSSPLTFQERMLLKALGLNTRPNPIAPGPVPKSLRDIFEKGINKDNPCMMEGFGVPGNIVRSYRDQGPVAAMEEPQESLCLKKFLFFDLSAVENKEQLTLGQLEIKFKHNSYYGQQFHLRLYRTLQLSLKGMRESKMNRKLLVSQSFRLLHKSLYFNLTKVAKDWKTPEKNMGLLLEIYASSKLAGDNRSFAVCEPIQSFIYTSLLTVSLDPSSCKTPRAKRSTHSSPPTPSNICKKRRLYIDFKDVGWQNWVIAPRGYMANYCYGECPYPLTEMLRGTNHAVLQTLVHSVEPESTPLPCCAPTKLSPISMLYYDNNDNVVLRHYEDMVVDECGCK.

The N-terminal stretch at 1-16 (MLSLACFFSFLLMVKS) is a signal peptide. A propeptide spanning residues 17-236 (SPLTFQERML…SSCKTPRAKR (220 aa)) is cleaved from the precursor. N-linked (GlcNAc...) asparagine glycans are attached at residues Asn-171 and Asn-202. 3 cysteine pairs are disulfide-bonded: Cys-249/Cys-315, Cys-278/Cys-347, and Cys-282/Cys-349.

This sequence belongs to the TGF-beta family. As to quaternary structure, homodimer; disulfide-linked. Also forms heterodimers with other TGF-beta family members including nodal2/nr-2 and bmp4.

It localises to the secreted. In terms of biological role, required for posterior mesoderm formation during embryogenesis. Acts indirectly to suppress head formation by altering mesodermal patterning. Also involved in the establishment of left-right axis asymmetry, acting upstream of nodal/nr-1. Can exert long-range effects in the embryo. The polypeptide is Derriere protein (Xenopus tropicalis (Western clawed frog)).